Here is a 238-residue protein sequence, read N- to C-terminus: Leucyl/phenylalanyl-tRNA--protein transferase (238 aa).

This sequence belongs to the L/F-transferase family.

It is found in the cytoplasm. It carries out the reaction N-terminal L-lysyl-[protein] + L-leucyl-tRNA(Leu) = N-terminal L-leucyl-L-lysyl-[protein] + tRNA(Leu) + H(+). The catalysed reaction is N-terminal L-arginyl-[protein] + L-leucyl-tRNA(Leu) = N-terminal L-leucyl-L-arginyl-[protein] + tRNA(Leu) + H(+). The enzyme catalyses L-phenylalanyl-tRNA(Phe) + an N-terminal L-alpha-aminoacyl-[protein] = an N-terminal L-phenylalanyl-L-alpha-aminoacyl-[protein] + tRNA(Phe). Its function is as follows. Functions in the N-end rule pathway of protein degradation where it conjugates Leu, Phe and, less efficiently, Met from aminoacyl-tRNAs to the N-termini of proteins containing an N-terminal arginine or lysine. The sequence is that of Leucyl/phenylalanyl-tRNA--protein transferase from Psychromonas ingrahamii (strain DSM 17664 / CCUG 51855 / 37).